The chain runs to 589 residues: Aspartate--tRNA ligase (589 aa).

Glu172 serves as a coordination point for L-aspartate. Residues 196–199 are aspartate; the sequence is QLFK. Residue Arg218 participates in L-aspartate binding. ATP is bound by residues 218-220 and Gln227; that span reads RDE. His449 provides a ligand contact to L-aspartate. Glu483 is a binding site for ATP. Arg490 is an L-aspartate binding site. 535-538 is a binding site for ATP; it reads GLDR.

This sequence belongs to the class-II aminoacyl-tRNA synthetase family. Type 1 subfamily. As to quaternary structure, homodimer.

It is found in the cytoplasm. It catalyses the reaction tRNA(Asp) + L-aspartate + ATP = L-aspartyl-tRNA(Asp) + AMP + diphosphate. Its function is as follows. Catalyzes the attachment of L-aspartate to tRNA(Asp) in a two-step reaction: L-aspartate is first activated by ATP to form Asp-AMP and then transferred to the acceptor end of tRNA(Asp). The polypeptide is Aspartate--tRNA ligase (Actinobacillus succinogenes (strain ATCC 55618 / DSM 22257 / CCUG 43843 / 130Z)).